The sequence spans 192 residues: Erythropoietin (192 aa).

A signal peptide spans 1–26 (MGVPERPTLLLLLSLLLIPLGLPVLC). An intrachain disulfide couples Cys33 to Cys187. N-linked (GlcNAc...) asparagine glycosylation is found at Asn50, Asn64, and Asn109.

It belongs to the EPO/TPO family. In terms of tissue distribution, produced by kidney or liver of adult mammals and by liver of fetal or neonatal mammals.

The protein localises to the secreted. Hormone involved in the regulation of erythrocyte proliferation and differentiation and the maintenance of a physiological level of circulating erythrocyte mass. Binds to EPOR leading to EPOR dimerization and JAK2 activation thereby activating specific downstream effectors, including STAT1 and STAT3. In Rattus norvegicus (Rat), this protein is Erythropoietin (Epo).